We begin with the raw amino-acid sequence, 428 residues long: MFVDQVKIYVKGGDGGNGMVAYRREKYVPKGGPAGGDGGKGADVVFIVEEGLRTLMDFRYQRHFKADRGQHGMSKGQHGRKSEDLLVKVPPGTVVKDEKTGQILADLVTHGQTAVIAKGGRGGRGNSRFATATNPAPEIAENGEPGQERDVILELKVLADVGLVGFPSVGKSTLLSVVSSARPKIAEYHFTTIVPNLGVVETGDNRSFVMADLPGLIEGAHAGVGLGHQFLRHIERTRVIVHVIDMSGLEGRDPYEDYVTINNELKEYNLRLTERPQVVVANKMDMPDAEENLQAFKEKVGDEVKIFPISAVTKQGVRDLLFEVANLIETTPEFPIHEVIDESDTSVMYKFETEGVKFDITRESDGTFVISGYDIEKTFKMTDFSRDESVRRFARQMRGMGIDEALRARGAKDGDIVKILEYEFEFID.

Residues 1-158 (MFVDQVKIYV…RDVILELKVL (158 aa)) enclose the Obg domain. The OBG-type G domain maps to 159–329 (ADVGLVGFPS…LLFEVANLIE (171 aa)). GTP contacts are provided by residues 165–172 (GFPSVGKS), 190–194 (FTTIV), 212–215 (DLPG), 282–285 (NKMD), and 310–312 (SAV). 2 residues coordinate Mg(2+): S172 and T192. Residues 350–428 (KFETEGVKFD…ILEYEFEFID (79 aa)) enclose the OCT domain.

The protein belongs to the TRAFAC class OBG-HflX-like GTPase superfamily. OBG GTPase family. In terms of assembly, monomer. Mg(2+) is required as a cofactor.

It localises to the cytoplasm. Functionally, an essential GTPase which binds GTP, GDP and possibly (p)ppGpp with moderate affinity, with high nucleotide exchange rates and a fairly low GTP hydrolysis rate. Plays a role in control of the cell cycle, stress response, ribosome biogenesis and in those bacteria that undergo differentiation, in morphogenesis control. The polypeptide is GTPase Obg (Bacillus cereus (strain AH820)).